The following is a 511-amino-acid chain: Protoheme IX farnesyltransferase, mitochondrial (511 aa).

A mitochondrion-targeting transit peptide spans 1–23 (MSSSTESLPGTLRRTLTTSRAPA). Disordered stretches follow at residues 1–27 (MSSSTESLPGTLRRTLTTSRAPAATSS) and 50–136 (HDSA…LAPD). 3 stretches are compositionally biased toward low complexity: residues 52 to 79 (SASSQRSTTVASTTSTTADAADGSSSTT), 104 to 115 (RKAAAAAAAAAA), and 126 to 136 (PDAPTADLAPD). 8 consecutive transmembrane segments (helical) span residues 168–188 (LTVLVVLSAMVPYALYPVPSF), 197–217 (SLAPSLSPLTLLFLTTGTTLC), 253–273 (AAVLFAVGCGLAGTLALYFGV), 275–295 (PTVSFLGAANIALYAGAYTPL), 303–323 (TWVGAIVGGIPPLMGWAAAAG), 344–364 (LGGWLFAGLLFAWQFPHFMPL), 398–418 (AFIPLCVGLSATGVTEWSFAV), and 444–464 (ARGLFWASVWHLPVIMVLALA).

The protein belongs to the UbiA prenyltransferase family.

It localises to the mitochondrion membrane. In terms of biological role, converts protoheme IX and farnesyl diphosphate to heme O. This chain is Protoheme IX farnesyltransferase, mitochondrial (pft-1), found in Neurospora crassa (strain ATCC 24698 / 74-OR23-1A / CBS 708.71 / DSM 1257 / FGSC 987).